Here is a 476-residue protein sequence, read N- to C-terminus: uncharacterized protein (476 aa).

The stretch at 147 to 204 (DVRLAELRRRRAELEAEIAAVEAGDIAVLDPTAVRDRYQQLSTTARELLSDFREVEEN) forms a coiled coil.

This is an uncharacterized protein from Mycolicibacterium smegmatis (strain ATCC 700084 / mc(2)155) (Mycobacterium smegmatis).